Here is a 137-residue protein sequence, read N- to C-terminus: Probable 4-amino-4-deoxy-L-arabinose-phosphoundecaprenol flippase subunit ArnF (137 aa).

Transmembrane regions (helical) follow at residues 43–63 (AIAV…FWLL), 74–94 (YSLL…LPFF), and 98–118 (FTVS…TINL).

This sequence belongs to the ArnF family. As to quaternary structure, heterodimer of ArnE and ArnF.

The protein resides in the cell inner membrane. It functions in the pathway bacterial outer membrane biogenesis; lipopolysaccharide biosynthesis. In terms of biological role, translocates 4-amino-4-deoxy-L-arabinose-phosphoundecaprenol (alpha-L-Ara4N-phosphoundecaprenol) from the cytoplasmic to the periplasmic side of the inner membrane. In Pseudomonas savastanoi pv. phaseolicola (strain 1448A / Race 6) (Pseudomonas syringae pv. phaseolicola (strain 1448A / Race 6)), this protein is Probable 4-amino-4-deoxy-L-arabinose-phosphoundecaprenol flippase subunit ArnF.